Consider the following 320-residue polypeptide: Small ribosomal subunit protein mS35 (320 aa).

The disordered stretch occupies residues 24–63 (SVASPAAPRAGPRTASRSERPMRRKALPPRTEKMDTDQDW).

Belongs to the mitochondrion-specific ribosomal protein mS35 family. As to quaternary structure, component of the mitochondrial ribosome small subunit (28S) which comprises a 12S rRNA and about 30 distinct proteins.

The protein resides in the mitochondrion. This is Small ribosomal subunit protein mS35 from Mus musculus (Mouse).